Here is a 314-residue protein sequence, read N- to C-terminus: E3 ubiquitin-protein ligase CHIP (314 aa).

Basic and acidic residues predominate over residues 1–11 (MKGKEEREREG). The disordered stretch occupies residues 1–47 (MKGKEEREREGGGGAVGPGAAGPGAGGGSPEKSHSAQEHKEQGNRLF). Positions 12–29 (GGGAVGPGAAGPGAGGGS) are enriched in gly residues. Basic and acidic residues predominate over residues 31–43 (EKSHSAQEHKEQG). 3 TPR repeats span residues 36–69 (AQEHKEQGNRLFGGRKYPEAAAAYGRAINRNPLV), 70–103 (AVYYTNRALCYLKMQQHDKALADCKRALELDGQS), and 105–137 (KAHFFLGQCQMEMENYDEAIANLQRAYNLAKEQ). A U-box domain is found at 237–311 (DIPDYLCGKI…DAFISENGWV (75 aa)).

In terms of assembly, homodimer.

The protein localises to the cytoplasm. It localises to the nucleus. Its subcellular location is the mitochondrion. The enzyme catalyses S-ubiquitinyl-[E2 ubiquitin-conjugating enzyme]-L-cysteine + [acceptor protein]-L-lysine = [E2 ubiquitin-conjugating enzyme]-L-cysteine + N(6)-ubiquitinyl-[acceptor protein]-L-lysine.. Its function is as follows. E3 ubiquitin-protein ligase which targets misfolded chaperone substrates towards proteasomal degradation. Collaborates with ATXN3 in the degradation of misfolded chaperone substrates: ATXN3 restricting the length of ubiquitin chain attached to STUB1/CHIP substrates and preventing further chain extension. In Gallus gallus (Chicken), this protein is E3 ubiquitin-protein ligase CHIP.